A 502-amino-acid chain; its full sequence is Uric acid degradation bifunctional protein (502 aa).

Residues 1-178 (MMRLKQLNEM…NSMTKHKERV (178 aa)) are OHCU decarboxylase. The active-site Proton donor; for OHCU decarboxylase activity is the H68. 5-hydroxy-2-oxo-4-ureido-2,5-dihydro-1H-imidazole-5-carboxylate contacts are provided by residues P69, 81–85 (SQEEQ), and 116–120 (FVMAV). Residues 179 to 502 (MYYGKGDVFA…DEPDHKGALK (324 aa)) are urate oxidase. K183 functions as the Charge relay system; for urate oxidase activity in the catalytic mechanism. Residue K194 is the Charge relay system of the active site. T243 serves as the catalytic Charge relay system; for urate oxidase activity. Residues T243, D244, F354, R371, I419, Q420, and N446 each contribute to the urate site.

The protein in the N-terminal section; belongs to the OHCU decarboxylase family. In the C-terminal section; belongs to the uricase family.

The catalysed reaction is 5-hydroxy-2-oxo-4-ureido-2,5-dihydro-1H-imidazole-5-carboxylate + H(+) = (S)-allantoin + CO2. The enzyme catalyses urate + O2 + H2O = 5-hydroxyisourate + H2O2. Its pathway is purine metabolism; urate degradation; (S)-allantoin from urate: step 1/3. It participates in purine metabolism; urate degradation; (S)-allantoin from urate: step 3/3. Its function is as follows. Catalyzes two steps in the degradation of uric acid, i.e. the oxidation of uric acid to 5-hydroxyisourate (HIU) and the stereoselective decarboxylation of 2-oxo-4-hydroxy-4-carboxy-5-ureidoimidazoline (OHCU) to (S)-allantoin. The chain is Uric acid degradation bifunctional protein (uao) from Bacillus sp. (strain TB-90).